A 292-amino-acid chain; its full sequence is Probable ABC transporter permease protein PH1215 (292 aa).

6 helical membrane-spanning segments follow: residues I10–V30, L72–L92, I106–Y126, I160–I180, L215–L235, and F261–P281. The ABC transmembrane type-1 domain maps to L68 to Y284.

The protein belongs to the binding-protein-dependent transport system permease family. MalFG subfamily.

The protein localises to the cell membrane. Its function is as follows. Probably part of a binding-protein-dependent transport system PH1214/15/16. Probably responsible for the translocation of the substrate across the membrane. This Pyrococcus horikoshii (strain ATCC 700860 / DSM 12428 / JCM 9974 / NBRC 100139 / OT-3) protein is Probable ABC transporter permease protein PH1215.